We begin with the raw amino-acid sequence, 232 residues long: 2,3,4,5-tetrahydropyridine-2,6-dicarboxylate N-acetyltransferase (232 aa).

Belongs to the transferase hexapeptide repeat family. DapH subfamily.

The enzyme catalyses (S)-2,3,4,5-tetrahydrodipicolinate + acetyl-CoA + H2O = L-2-acetamido-6-oxoheptanedioate + CoA. The protein operates within amino-acid biosynthesis; L-lysine biosynthesis via DAP pathway; LL-2,6-diaminopimelate from (S)-tetrahydrodipicolinate (acetylase route): step 1/3. Catalyzes the transfer of an acetyl group from acetyl-CoA to tetrahydrodipicolinate. The protein is 2,3,4,5-tetrahydropyridine-2,6-dicarboxylate N-acetyltransferase of Streptococcus gordonii (strain Challis / ATCC 35105 / BCRC 15272 / CH1 / DL1 / V288).